Here is a 444-residue protein sequence, read N- to C-terminus: ATP-dependent protease ATPase subunit HslU (444 aa).

ATP is bound by residues Ile18 and 60–65 (GVGKTE). The disordered stretch occupies residues 143–163 (WGEVESHDSHSSTRQAFRKKL). Asp257, Glu322, and Arg394 together coordinate ATP.

Belongs to the ClpX chaperone family. HslU subfamily. A double ring-shaped homohexamer of HslV is capped on each side by a ring-shaped HslU homohexamer. The assembly of the HslU/HslV complex is dependent on binding of ATP.

Its subcellular location is the cytoplasm. Functionally, ATPase subunit of a proteasome-like degradation complex; this subunit has chaperone activity. The binding of ATP and its subsequent hydrolysis by HslU are essential for unfolding of protein substrates subsequently hydrolyzed by HslV. HslU recognizes the N-terminal part of its protein substrates and unfolds these before they are guided to HslV for hydrolysis. The chain is ATP-dependent protease ATPase subunit HslU from Haemophilus influenzae (strain PittEE).